Reading from the N-terminus, the 129-residue chain is Glycine cleavage system H protein (129 aa).

The region spanning 24–106 (SYTVGITEHA…YGEGWFFRVM (83 aa)) is the Lipoyl-binding domain. N6-lipoyllysine is present on K65.

It belongs to the GcvH family. As to quaternary structure, the glycine cleavage system is composed of four proteins: P, T, L and H. Requires (R)-lipoate as cofactor.

In terms of biological role, the glycine cleavage system catalyzes the degradation of glycine. The H protein shuttles the methylamine group of glycine from the P protein to the T protein. In Shewanella baltica (strain OS185), this protein is Glycine cleavage system H protein.